A 409-amino-acid polypeptide reads, in one-letter code: NADH-quinone oxidoreductase subunit D (409 aa).

This sequence belongs to the complex I 49 kDa subunit family. NDH-1 is composed of 14 different subunits. Subunits NuoB, C, D, E, F, and G constitute the peripheral sector of the complex.

It is found in the cell inner membrane. It carries out the reaction a quinone + NADH + 5 H(+)(in) = a quinol + NAD(+) + 4 H(+)(out). In terms of biological role, NDH-1 shuttles electrons from NADH, via FMN and iron-sulfur (Fe-S) centers, to quinones in the respiratory chain. The immediate electron acceptor for the enzyme in this species is believed to be ubiquinone. Couples the redox reaction to proton translocation (for every two electrons transferred, four hydrogen ions are translocated across the cytoplasmic membrane), and thus conserves the redox energy in a proton gradient. The chain is NADH-quinone oxidoreductase subunit D from Helicobacter pylori (strain HPAG1).